A 34-amino-acid polypeptide reads, in one-letter code: Jingzhaotoxin F7-10.36 (34 aa).

3 disulfides stabilise this stretch: cysteine 2/cysteine 17, cysteine 9/cysteine 22, and cysteine 16/cysteine 29.

It belongs to the neurotoxin 10 (Hwtx-1) family. 50 (Jztz-F7) subfamily. In terms of tissue distribution, expressed by the venom gland.

The protein localises to the secreted. Its function is as follows. Probable ion channel inhibitor. The chain is Jingzhaotoxin F7-10.36 from Chilobrachys guangxiensis (Chinese earth tiger tarantula).